A 212-amino-acid polypeptide reads, in one-letter code: Probable dual specificity protein phosphatase DDB_G0269404 (212 aa).

The Tyrosine-protein phosphatase domain occupies 30–169 (FDAQEVIPNL…LINYEATILK (140 aa)). Cys113 functions as the Phosphocysteine intermediate in the catalytic mechanism.

This sequence belongs to the protein-tyrosine phosphatase family. Non-receptor class dual specificity subfamily.

The catalysed reaction is O-phospho-L-tyrosyl-[protein] + H2O = L-tyrosyl-[protein] + phosphate. It catalyses the reaction O-phospho-L-seryl-[protein] + H2O = L-seryl-[protein] + phosphate. The enzyme catalyses O-phospho-L-threonyl-[protein] + H2O = L-threonyl-[protein] + phosphate. Has a dual specificity toward Ser/Thr and Tyr-containing proteins. The protein is Probable dual specificity protein phosphatase DDB_G0269404 of Dictyostelium discoideum (Social amoeba).